Reading from the N-terminus, the 72-residue chain is Large ribosomal subunit protein bL31 (72 aa).

Residues C16, C18, C38, and C41 each coordinate Zn(2+).

The protein belongs to the bacterial ribosomal protein bL31 family. Type A subfamily. As to quaternary structure, part of the 50S ribosomal subunit. Zn(2+) is required as a cofactor.

In terms of biological role, binds the 23S rRNA. The polypeptide is Large ribosomal subunit protein bL31 (Francisella tularensis subsp. holarctica (strain LVS)).